Reading from the N-terminus, the 289-residue chain is 4-hydroxy-3-methylbut-2-enyl diphosphate reductase (289 aa).

Residue cysteine 12 participates in [4Fe-4S] cluster binding. The (2E)-4-hydroxy-3-methylbut-2-enyl diphosphate site is built by histidine 41 and histidine 84. Dimethylallyl diphosphate contacts are provided by histidine 41 and histidine 84. The isopentenyl diphosphate site is built by histidine 41 and histidine 84. Cysteine 106 contributes to the [4Fe-4S] cluster binding site. Histidine 134 lines the (2E)-4-hydroxy-3-methylbut-2-enyl diphosphate pocket. Histidine 134 provides a ligand contact to dimethylallyl diphosphate. Histidine 134 provides a ligand contact to isopentenyl diphosphate. Residue glutamate 136 is the Proton donor of the active site. Serine 172 contributes to the (2E)-4-hydroxy-3-methylbut-2-enyl diphosphate binding site. Cysteine 200 provides a ligand contact to [4Fe-4S] cluster. Residues serine 229, asparagine 231, and serine 273 each coordinate (2E)-4-hydroxy-3-methylbut-2-enyl diphosphate. Dimethylallyl diphosphate contacts are provided by serine 229, asparagine 231, and serine 273. Residues serine 229, asparagine 231, and serine 273 each contribute to the isopentenyl diphosphate site.

Belongs to the IspH family. [4Fe-4S] cluster serves as cofactor.

The catalysed reaction is isopentenyl diphosphate + 2 oxidized [2Fe-2S]-[ferredoxin] + H2O = (2E)-4-hydroxy-3-methylbut-2-enyl diphosphate + 2 reduced [2Fe-2S]-[ferredoxin] + 2 H(+). It catalyses the reaction dimethylallyl diphosphate + 2 oxidized [2Fe-2S]-[ferredoxin] + H2O = (2E)-4-hydroxy-3-methylbut-2-enyl diphosphate + 2 reduced [2Fe-2S]-[ferredoxin] + 2 H(+). The protein operates within isoprenoid biosynthesis; dimethylallyl diphosphate biosynthesis; dimethylallyl diphosphate from (2E)-4-hydroxy-3-methylbutenyl diphosphate: step 1/1. It participates in isoprenoid biosynthesis; isopentenyl diphosphate biosynthesis via DXP pathway; isopentenyl diphosphate from 1-deoxy-D-xylulose 5-phosphate: step 6/6. In terms of biological role, catalyzes the conversion of 1-hydroxy-2-methyl-2-(E)-butenyl 4-diphosphate (HMBPP) into a mixture of isopentenyl diphosphate (IPP) and dimethylallyl diphosphate (DMAPP). Acts in the terminal step of the DOXP/MEP pathway for isoprenoid precursor biosynthesis. This is 4-hydroxy-3-methylbut-2-enyl diphosphate reductase from Opitutus terrae (strain DSM 11246 / JCM 15787 / PB90-1).